Consider the following 464-residue polypeptide: Argininosuccinate lyase (464 aa).

The protein belongs to the lyase 1 family. Argininosuccinate lyase subfamily.

The protein resides in the cytoplasm. The enzyme catalyses 2-(N(omega)-L-arginino)succinate = fumarate + L-arginine. The protein operates within amino-acid biosynthesis; L-arginine biosynthesis; L-arginine from L-ornithine and carbamoyl phosphate: step 3/3. This Pseudomonas fluorescens (strain SBW25) protein is Argininosuccinate lyase.